The following is a 90-amino-acid chain: Small cysteine-rich outer membrane protein OmcA (90 aa).

The N-terminal stretch at Met-1–Ser-19 is a signal peptide. A lipid anchor (N-palmitoyl cysteine) is attached at Cys-20. Cys-20 carries the S-diacylglycerol cysteine lipid modification. Positions Thr-69–Gln-90 are disordered.

As to quaternary structure, part of a disulfide cross-linked outer membrane complex (COMC) composed of the major outer membrane porin (MOMP), the small cysteine-rich protein (OmcA) and the large cysteine-rich periplasmic protein (OmcB).

It is found in the cell outer membrane. In terms of biological role, in elementary bodies (EBs, the infectious stage, which is able to survive outside the host cell) provides the structural integrity of the outer envelope through disulfide cross-links with the large cysteine-rich periplasmic protein and the major outer membrane porin. It has been described in publications as the Sarkosyl-insoluble COMC (Chlamydia outer membrane complex), and serves as the functional equivalent of peptidoglycan. The chain is Small cysteine-rich outer membrane protein OmcA (omcA) from Chlamydia pneumoniae (Chlamydophila pneumoniae).